Reading from the N-terminus, the 256-residue chain is Triosephosphate isomerase (256 aa).

10–12 (NWK) is a substrate binding site. His-97 serves as the catalytic Electrophile. Glu-169 functions as the Proton acceptor in the catalytic mechanism. Substrate-binding positions include Gly-175, Ser-214, and 235 to 236 (GG).

The protein belongs to the triosephosphate isomerase family. As to quaternary structure, homodimer.

It localises to the cytoplasm. It catalyses the reaction D-glyceraldehyde 3-phosphate = dihydroxyacetone phosphate. The protein operates within carbohydrate biosynthesis; gluconeogenesis. Its pathway is carbohydrate degradation; glycolysis; D-glyceraldehyde 3-phosphate from glycerone phosphate: step 1/1. Its function is as follows. Involved in the gluconeogenesis. Catalyzes stereospecifically the conversion of dihydroxyacetone phosphate (DHAP) to D-glyceraldehyde-3-phosphate (G3P). The sequence is that of Triosephosphate isomerase from Actinobacillus pleuropneumoniae serotype 7 (strain AP76).